Here is a 441-residue protein sequence, read N- to C-terminus: UPF0761 membrane protein Clim_1521 (441 aa).

A run of 6 helical transmembrane segments spans residues 54 to 74 (IFLSAGSLAFQTLLSIVPFLA), 122 to 142 (TVPLIGGLLLFIIALSLISTI), 161 to 181 (AFTLYWTVLTLGPVLIGSSLG), 203 to 223 (LISFLPFVNSLLSFLLLYMLV), 233 to 253 (AFSGAVAAALLFELSKKWFVF), and 266 to 286 (GAISAVPLLFFWIYIGWLVVL).

The protein belongs to the UPF0761 family.

Its subcellular location is the cell inner membrane. The chain is UPF0761 membrane protein Clim_1521 from Chlorobium limicola (strain DSM 245 / NBRC 103803 / 6330).